The following is a 426-amino-acid chain: uncharacterized protein (426 aa).

The interval 23-42 (ENPRPTNNPSTSHPSDSYST) is disordered. Positions 26 to 42 (RPTNNPSTSHPSDSYST) are enriched in polar residues.

Belongs to the serpin family.

This is an uncharacterized protein from Thermococcus kodakarensis (strain ATCC BAA-918 / JCM 12380 / KOD1) (Pyrococcus kodakaraensis (strain KOD1)).